The sequence spans 158 residues: Cyclic pyranopterin monophosphate synthase (158 aa).

Residues 75–77 and 113–114 each bind substrate; these read LCH and ME. The active site involves aspartate 128.

It belongs to the MoaC family. In terms of assembly, homohexamer; trimer of dimers.

It carries out the reaction (8S)-3',8-cyclo-7,8-dihydroguanosine 5'-triphosphate = cyclic pyranopterin phosphate + diphosphate. It participates in cofactor biosynthesis; molybdopterin biosynthesis. Its function is as follows. Catalyzes the conversion of (8S)-3',8-cyclo-7,8-dihydroguanosine 5'-triphosphate to cyclic pyranopterin monophosphate (cPMP). The sequence is that of Cyclic pyranopterin monophosphate synthase from Histophilus somni (strain 129Pt) (Haemophilus somnus).